The following is a 1259-amino-acid chain: Trafficking protein particle complex II-specific subunit 130 homolog (1259 aa).

A2 is modified (N-acetylalanine). A disordered region spans residues 479 to 526 (GNIPEMFDGRPSFTEGSGLEASPRTPSSLKVQAPPMSRTNSSPGNFES).

Belongs to the TMEM1 family. As to quaternary structure, part of the multisubunit TRAPP (transport protein particle) II complex composed of BET3, BET5, TRS20, TRS23, TRS31, TRS33, TRS65, TRS85, TRS120 and TRS130.

The protein localises to the golgi apparatus. It is found in the trans-Golgi network. Its subcellular location is the early endosome. In terms of biological role, specific subunit of the TRAPP II complex, a highly conserved vesicle tethering complex that is required for the proper transport of proteins in post-Golgi trafficking pathways to the growing cell plate in mitotic active cells. Required for the polarized and selective transport of PIN2, but not PIN1, to the plasma membrane. Not required for ER-to-Golgi as well as biosynthetic and endocytic vacuolar transport. The protein is Trafficking protein particle complex II-specific subunit 130 homolog of Arabidopsis thaliana (Mouse-ear cress).